The sequence spans 226 residues: AA9 family lytic polysaccharide monooxygenase E (226 aa).

Residues 1–18 (MLANGAIVFLAAALGVSG) form the signal peptide. His19 contacts Cu(2+). 2 disulfides stabilise this stretch: Cys56–Cys174 and Cys144–Cys226. Asn69 carries N-linked (GlcNAc...) asparagine glycosylation. A Cu(2+)-binding site is contributed by His86. O2 is bound by residues His160 and Gln169. Residue Tyr171 coordinates Cu(2+).

Belongs to the polysaccharide monooxygenase AA9 family. It depends on Cu(2+) as a cofactor.

The protein localises to the secreted. The catalysed reaction is [(1-&gt;4)-beta-D-glucosyl]n+m + reduced acceptor + O2 = 4-dehydro-beta-D-glucosyl-[(1-&gt;4)-beta-D-glucosyl]n-1 + [(1-&gt;4)-beta-D-glucosyl]m + acceptor + H2O.. In terms of biological role, lytic polysaccharide monooxygenase (LPMO) that depolymerizes crystalline and amorphous polysaccharides via the oxidation of scissile alpha- or beta-(1-4)-glycosidic bonds, yielding C1 and C4 oxidation products. Catalysis by LPMOs requires the reduction of the active-site copper from Cu(II) to Cu(I) by a reducing agent and H(2)O(2) or O(2) as a cosubstrate. Shows endoglucanase activity on tamarind xyloglucan, as well as on beechwood xylan when combined with phosphoric acid swollen cellulose (PASC). Shows no activity on wheat arabinoxylan, konjac glucomannan, acetylated spruce galactoglucomannan, or cellopentaose. The polypeptide is AA9 family lytic polysaccharide monooxygenase E (Thermothielavioides terrestris (strain ATCC 38088 / NRRL 8126) (Thielavia terrestris)).